The primary structure comprises 425 residues: GTPase Obg (425 aa).

An Obg domain is found at 1 to 158; it reads MFRDSAKIYV…YSLILEMKMI (158 aa). Residues 159–330 enclose the OBG-type G domain; the sequence is ADVGLVGYPN…LLYAVSETLK (172 aa). Residues 165–172, 190–194, 212–215, 282–285, and 311–313 each bind GTP; these read GYPNVGKS, FTTLV, DIPG, NKMD, and SAA. Mg(2+) contacts are provided by S172 and T192. Residues 348–425 enclose the OCT domain; it reads YKVQEEKPFE…IYDTEFDYTR (78 aa).

The protein belongs to the TRAFAC class OBG-HflX-like GTPase superfamily. OBG GTPase family. As to quaternary structure, monomer. Mg(2+) serves as cofactor.

It localises to the cytoplasm. In terms of biological role, an essential GTPase which binds GTP, GDP and possibly (p)ppGpp with moderate affinity, with high nucleotide exchange rates and a fairly low GTP hydrolysis rate. Plays a role in control of the cell cycle, stress response, ribosome biogenesis and in those bacteria that undergo differentiation, in morphogenesis control. This is GTPase Obg from Ruminiclostridium cellulolyticum (strain ATCC 35319 / DSM 5812 / JCM 6584 / H10) (Clostridium cellulolyticum).